Consider the following 509-residue polypeptide: Cytochrome P450 monooxygenase LUC2 (509 aa).

The helical transmembrane segment at 30–50 (TKVLVTFLTIVIIAPRVFTVI) threads the bilayer. C456 serves as a coordination point for heme.

Belongs to the cytochrome P450 family. It depends on heme as a cofactor.

It localises to the membrane. The protein operates within mycotoxin biosynthesis. In terms of biological role, cytochrome P450 monooxygenase; part of the gene cluster that mediates the biosynthesis of the mycotoxin lucilactaene and the lucilactaene-related compound NG-391 that act as cell cycle inhibitors with potent growth inhibitory activity against malarial parasites, moderate growth inhibitory activity against cancer cells, and no activity against bacteria and fungi. Within the pathway, LUC2 performs C-20 methyl group hydroxylation of several intermediates. LUC2 does not perform the full oxidation of the C-20 methyl group into carboxylic acid, which is a prerequisite for the final methylation step. The pathway begins with the hybrid PKS-NRPS synthetase LUC5 which is responsible for the condensation of one acetyl-coenzyme A (CoA) unit with six malonyl-CoA units and the amide linkage of the arising heptaketide and homoserine, subsequently releasing the first intermediate prelucilactaene B. Both the cytochrome P450 monooxygenase LUC2 and the hydrolase LUC6 function in parallel in modification of prelucilactaene B. LUC6 may catalyze the 2-pyrrolidone ring formation to form prelucilactaene C from prelucilactaene B, followed by C-15 hydroxylation by the same enzyme to give prelucilactaene D, which is then converted to prelucilactaene E by epoxidation, and finally to prelucilactaene F by cyclization. Prelucilactane D, prelucilactaene E, and prelucilactaene F can be converted to dihydrolucilactaene, NG391, and lucilactaene, respectively, via C-20 methyl group hydroxylation by the cytochrome P450 monooxygenase LUC2. However, LUC2, unlike FUS8 in fusarin C biosynthesis, is not enough for the full oxidation of the C-20 methyl group into carboxylic acid, which is a prerequisite for the final methylation step. The aldehyde dehydrogenase LUC3 is involved in the biosynthesis by further oxidation of the C-20 alcoholic analog prelucilactaene G into a carboxylic derivative. This unidentified carboxylic derivative may be converted to demethyllucilactaene. As the last step, the methyltransferase LUC1 methylates the hydroxyl group at C-21 of demethyllucilactaene to generate lucilactaene. The protein is Cytochrome P450 monooxygenase LUC2 of Fusarium sp.